The sequence spans 1105 residues: SWI/SNF complex subunit SMARCC1 (1105 aa).

An N-acetylalanine modification is found at Ala-2. Positions 28–302 are marR-like, BRCT and chromo domains module; that stretch reads LAVYRRKDGG…PVSFRQRIST (275 aa). Residues 38–164 form the MarR-like domain; that stretch reads PATKFWESPE…IEKTLVQNNC (127 aa). Residues 168-211 enclose the BRCT; N-terminus domain; sequence PNIYLIPDIDLKLANKLKDIIKRHQGTFTDEKSKASHHIYPYSS. Lys-179 participates in a covalent cross-link: Glycyl lysine isopeptide (Lys-Gly) (interchain with G-Cter in SUMO2). A Chromo domain is found at 217–245; it reads EWLRPVMRKEKQVLVHWGFYPDSYDTWVH. Residues 261–285 form the BRCT; C-terminus domain; it reads KPWKVHVKWILDTDIFNEWMNEEDY. The interval 296 to 439 is disordered; sequence FRQRISTKNE…DQSRSVDLGE (144 aa). Basic and acidic residues predominate over residues 302 to 318; the sequence is TKNEEPVRSPERRDRKA. Ser-310, Ser-328, and Ser-330 each carry phosphoserine. Thr-335 is modified (phosphothreonine). An N6-acetyllysine mark is found at Lys-345 and Lys-346. Position 350 is a phosphoserine (Ser-350). Lys-354 carries the post-translational modification N6-acetyllysine. Phosphoserine is present on Ser-357. Residue Lys-359 is modified to N6-acetyllysine; alternate. A Glycyl lysine isopeptide (Lys-Gly) (interchain with G-Cter in SUMO2); alternate cross-link involves residue Lys-359. Thr-398 carries the phosphothreonine modification. In terms of domain architecture, SWIRM spans 449–546; the sequence is IIIPSYASWF…YQVDPESRPM (98 aa). Ser-573 bears the Phosphoserine mark. Lys-592 participates in a covalent cross-link: Glycyl lysine isopeptide (Lys-Gly) (interchain with G-Cter in SUMO2). Positions 618 to 669 constitute an SANT domain; sequence SAGREWTEQETLLLLEALEMYKDDWNKVSEHVGSRTQDECILHFLRLPIEDP. Lys-739 is covalently cross-linked (Glycyl lysine isopeptide (Lys-Gly) (interchain with G-Cter in SUMO2)). The tract at residues 745–860 is disordered; the sequence is ARASGKVDPT…DTGKKKVEHE (116 aa). Acidic residues predominate over residues 776–785; it reads AEEEKMEADP. A compositionally biased stretch (basic and acidic residues) spans 789-860; it reads QPEKAENKVE…DTGKKKVEHE (72 aa). A Glycyl lysine isopeptide (Lys-Gly) (interchain with G-Cter in SUMO2) cross-link involves residue Lys-796. Ser-822 and Ser-825 each carry phosphoserine. Glycyl lysine isopeptide (Lys-Gly) (interchain with G-Cter in SUMO2) cross-links involve residues Lys-829 and Lys-856. Positions 914–946 form a coiled coil; it reads FEELETIMDREKEALEQQRQQLLTERQNFHMEQ. At Lys-948 the chain carries N6-acetyllysine. Disordered stretches follow at residues 956 to 1028 and 1041 to 1105; these read QQME…PGQH and IHPS…SAAP. Low complexity predominate over residues 957–993; that stretch reads QMEQQQHGQNPQQAHQHSGGPGLAPLGAAGHPGMMPH. 2 stretches are compositionally biased toward pro residues: residues 994-1017 and 1048-1057; these read QQPPPYPLMHHQMPPPHPPQPGQI and PTPPGMPPMP. Position 1064 is an asymmetric dimethylarginine (Arg-1064). The segment covering 1073–1105 has biased composition (pro residues); the sequence is MYPPPPQQQPPPPPPADGVPPPPAPGPPASAAP.

This sequence belongs to the SMARCC family. As to quaternary structure, component of the multiprotein chromatin-remodeling complexes SWI/SNF: SWI/SNF-A (BAF), SWI/SNF-B (PBAF) and related complexes. The canonical complex contains a catalytic subunit (either SMARCA4/BRG1/BAF190A or SMARCA2/BRM/BAF190B) and at least SMARCE1, ACTL6A/BAF53, SMARCC1/BAF155, SMARCC2/BAF170, and SMARCB1/SNF5/BAF47. Other subunits specific to each of the complexes may also be present permitting several possible combinations developmentally and tissue specific. Component of the BAF complex, which includes at least actin (ACTB), ARID1A/BAF250A, ARID1B/BAF250B, SMARCA2/BRM, SMARCA4/BRG1, ACTL6A/BAF53, ACTL6B/BAF53B, SMARCE1/BAF57, SMARCC1/BAF155, SMARCC2/BAF170, SMARCB1/SNF5/INI1, and one or more SMARCD1/BAF60A, SMARCD2/BAF60B, or SMARCD3/BAF60C. In muscle cells, the BAF complex also contains DPF3. Component of neural progenitors-specific chromatin remodeling complex (npBAF complex) composed of at least, ARID1A/BAF250A or ARID1B/BAF250B, SMARCD1/BAF60A, SMARCD3/BAF60C, SMARCA2/BRM/BAF190B, SMARCA4/BRG1/BAF190A, SMARCB1/BAF47, SMARCC1/BAF155, SMARCE1/BAF57, SMARCC2/BAF170, PHF10/BAF45A, ACTL6A/BAF53A and actin. Component of neuron-specific chromatin remodeling complex (nBAF complex) composed of at least, ARID1A/BAF250A or ARID1B/BAF250B, SMARCD1/BAF60A, SMARCD3/BAF60C, SMARCA2/BRM/BAF190B, SMARCA4/BRG1/BAF190A, SMARCB1/BAF47, SMARCC1/BAF155, SMARCE1/BAF57, SMARCC2/BAF170, DPF1/BAF45B, DPF3/BAF45C, ACTL6B/BAF53B and actin. Component of the SWI/SNF-B (PBAF) chromatin remodeling complex, at least composed of SMARCA4/BRG1, SMARCB1/BAF47/SNF5, ACTL6A/BAF53A or ACTL6B/BAF53B, SMARCE1/BAF57, SMARCD1/BAF60A, SMARCD2/BAF60B, perhaps SMARCD3/BAF60C, SMARCC1/BAF155, SMARCC2/BAF170, PBRM1/BAF180, ARID2/BAF200 and actin. Component of SWI/SNF (GBAF) subcomplex, which includes at least BICRA or BICRAL (mutually exclusive), BRD9, SS18, SMARCA2/BRM, SMARCA4/BRG1/BAF190A, ACTL6A/BAF53, SMARCC1/BAF155, and SMARCD1/BAF60A. May also interact with the SIN3A histone deacetylase transcription repressor complex in conjunction with SMARCA2 and SMARCA4. The minimal complex composed of SMARCC1 and SMARCA4 seems to be able to associate with cyclin such as CCNE1 or transcription factors such as KLF1 or GATA1. Interacts with NR3C1 and SMARD1. Interacts with TRIP12; leading to disrupt interaction between TRIP12 and SMARCE1 and prevent SMARCE1 ubiquitination. Interacts with CEBPB (when not methylated). Interacts with KDM6B. Interacts with MKKS; the interaction takes place predominantly in the cytoplasm and may modulate SMARCC1 location. Interacts with DPF2. Interacts with PRDM1/BLIMP1. Interacts with DPF3a (isoform 2 of DPF3/BAF45C) and with HDGFL2 in a DPF3a-dependent manner. In terms of processing, phosphorylated on undefined residues at the G2/M transition by ERK1 and other kinases. This may contribute to cell cycle specific inactivation of remodeling complexes containing the phosphorylated protein. In terms of tissue distribution, expressed in brain, heart, muscle, placenta, lung, liver, muscle, kidney and pancreas.

The protein localises to the nucleus. Its subcellular location is the cytoplasm. Its function is as follows. Involved in transcriptional activation and repression of select genes by chromatin remodeling (alteration of DNA-nucleosome topology). Component of SWI/SNF chromatin remodeling complexes that carry out key enzymatic activities, changing chromatin structure by altering DNA-histone contacts within a nucleosome in an ATP-dependent manner. May stimulate the ATPase activity of the catalytic subunit of the complex. Belongs to the neural progenitors-specific chromatin remodeling complex (npBAF complex) and the neuron-specific chromatin remodeling complex (nBAF complex). During neural development a switch from a stem/progenitor to a postmitotic chromatin remodeling mechanism occurs as neurons exit the cell cycle and become committed to their adult state. The transition from proliferating neural stem/progenitor cells to postmitotic neurons requires a switch in subunit composition of the npBAF and nBAF complexes. As neural progenitors exit mitosis and differentiate into neurons, npBAF complexes which contain ACTL6A/BAF53A and PHF10/BAF45A, are exchanged for homologous alternative ACTL6B/BAF53B and DPF1/BAF45B or DPF3/BAF45C subunits in neuron-specific complexes (nBAF). The npBAF complex is essential for the self-renewal/proliferative capacity of the multipotent neural stem cells. The nBAF complex along with CREST plays a role regulating the activity of genes essential for dendrite growth. The polypeptide is SWI/SNF complex subunit SMARCC1 (Homo sapiens (Human)).